The primary structure comprises 252 residues: Protein TRANSPARENT TESTA 16 (252 aa).

The 61-residue stretch at M1–Q61 folds into the MADS-box domain. The 91-residue stretch at Q86 to A176 folds into the K-box domain. The stretch at N121–R174 forms a coiled coil.

As to quaternary structure, interacts with AP1/AGL7, SEP1/AGL2, SEP2/AGL4, SEP3/AGL9 and AGL3/SEP4. As to expression, expressed in buds, flowers and immature seeds, but not in roots, stems, leaves, seedlings or siliques valves. Expression in seed coat is confined to the endothelium layer.

Its subcellular location is the nucleus. In terms of biological role, transcription factor involved in the developmental regulation of the endothelium and in the accumulation of proanthocyanidins (PAs) or condensed tannins which give the seed its brown pigmentation after oxidation. Necessary for the normal activation of the BANYULS promoter in the endothelium body. Is required, together with AGL11/STK for the maternal control of endothelium formation, which is essential for female gametophyte development and fertilization, and seed formation. Interacts genetically with AGL1/SHP1 and AGL5/SHP2 in a partially antagonistic manner and represses AGL1/SHP1, AGL5/SHP2, and AGL8/FUL during flower development. Is essential for the coordination of cell divisions in ovule, seed coat development and endosperm formation. Mediates the crosstalk between endothelium and nucellus to ensure proper seed formation. Functions redundantly with AGL63/GOA to repress nucellus growth and promote its degeneration. Represses the negative regulator of autophagy and programmed cell death HVA22D in the proximal nucellus. Binds specifically to the CArG box DNA sequence 5'-CC (A/T)6 GG-3'. This chain is Protein TRANSPARENT TESTA 16 (TT16), found in Arabidopsis thaliana (Mouse-ear cress).